Consider the following 379-residue polypeptide: Putative thylakoid lumen peptidyl-prolyl cis-trans isomerase sll0408 (379 aa).

A signal peptide spans 1-33 (MQIIKTPLGIITRRGLQLSLLSLLLTMLSLTWA). The region spanning 190–378 (GRATVEMTTN…SGADNLVNGN (189 aa)) is the PPIase cyclophilin-type domain.

It localises to the cellular thylakoid lumen. The enzyme catalyses [protein]-peptidylproline (omega=180) = [protein]-peptidylproline (omega=0). Its function is as follows. PPIases accelerate the folding of proteins. It catalyzes the cis-trans isomerization of proline imidic peptide bonds in oligopeptides. Required for the assembly and stabilization of PSII. The sequence is that of Putative thylakoid lumen peptidyl-prolyl cis-trans isomerase sll0408 from Synechocystis sp. (strain ATCC 27184 / PCC 6803 / Kazusa).